The following is a 74-amino-acid chain: uncharacterized protein (74 aa).

Residues 15-32 (FLHALTVTFLSDIFVWLV) traverse the membrane as a helical segment.

The protein localises to the membrane. This is an uncharacterized protein from Saccharomyces cerevisiae (strain ATCC 204508 / S288c) (Baker's yeast).